Reading from the N-terminus, the 334-residue chain is Ferrochelatase (334 aa).

Fe cation is bound by residues His207 and Glu288.

It belongs to the ferrochelatase family.

It is found in the cytoplasm. It catalyses the reaction heme b + 2 H(+) = protoporphyrin IX + Fe(2+). It participates in porphyrin-containing compound metabolism; protoheme biosynthesis; protoheme from protoporphyrin-IX: step 1/1. Its function is as follows. Catalyzes the ferrous insertion into protoporphyrin IX. The sequence is that of Ferrochelatase from Helicobacter pylori (strain P12).